The chain runs to 120 residues: LOB domain-containing protein 8 (120 aa).

The LOB domain maps to 8–109 (RPCCVCITKN…AYLHELEEKI (102 aa)).

This sequence belongs to the LOB domain-containing protein family.

The polypeptide is LOB domain-containing protein 8 (LBD8) (Arabidopsis thaliana (Mouse-ear cress)).